The primary structure comprises 117 residues: UPF0295 protein GK0479 (117 aa).

2 helical membrane passes run 12 to 32 (IRTF…LGLF) and 42 to 62 (LFML…FWIG).

It belongs to the UPF0295 family.

The protein localises to the cell membrane. This chain is UPF0295 protein GK0479, found in Geobacillus kaustophilus (strain HTA426).